We begin with the raw amino-acid sequence, 189 residues long: DAN domain family member 5 (189 aa).

Positions M1 to G22 are cleaved as a signal peptide. N38 carries an N-linked (GlcNAc...) asparagine glycan. 4 cysteine pairs are disulfide-bonded: C101-C148, C115-C162, C125-C183, and C129-C185. The CTCK domain occupies C101 to S186.

Belongs to the DAN family. In terms of tissue distribution, expressed in the retina, in inner segments of photoreceptors, at or close to the outer plexiform layer and in the ganglion cell layer (at protein level).

It is found in the secreted. In terms of biological role, antagonist of the extracellular signaling protein NODAL, which is required for correct left-right patterning during embryonic development. Antagonist of BMP and TGF-beta signaling. Independently of its role in left-right axis establishment, plays a role during heart development, possibly through the regulation of TGF-beta/Nodal signaling pathway. Displays anti-angiogenic activity by inhibiting endothelial sprouting, migration, and proliferation. Once internalized by endothelial cells, may alter their redox and glycolytic balance. This chain is DAN domain family member 5 (DAND5), found in Homo sapiens (Human).